The following is a 332-amino-acid chain: HTH-type transcriptional regulator IdnR (332 aa).

In terms of domain architecture, HTH lacI-type spans 6–60; the sequence is ISLQDIATLAGVTKMTVSRYIRSPKKVAKETGERIAKIMEEINYIPNRAPGMLLN. A DNA-binding region (H-T-H motif) is located at residues 8 to 27; it reads LQDIATLAGVTKMTVSRYIR.

Idn operon regulator. May repress gntKU and gntT genes when growing on L-idonate. The sequence is that of HTH-type transcriptional regulator IdnR (idnR) from Escherichia coli (strain K12).